Reading from the N-terminus, the 87-residue chain is Kappa 1b-bungarotoxin (87 aa).

Positions 1 to 21 are cleaved as a signal peptide; it reads MKTLLLTLVVVTIVCLDLGYT. Cystine bridges form between cysteine 24-cysteine 42, cysteine 35-cysteine 63, cysteine 48-cysteine 52, cysteine 67-cysteine 79, and cysteine 80-cysteine 85.

The protein belongs to the three-finger toxin family. Long-chain subfamily. Kappa-neurotoxin sub-subfamily. In terms of assembly, homo- and heterodimer; non-covalently linked. In terms of tissue distribution, expressed by the venom gland.

Its subcellular location is the secreted. Postsynaptic neurotoxin that binds and inhibits neuronal nicotinic acetylcholine receptors (nAChR) with high affinity (IC(50)&lt;100 nM). Is a selective, and slowly reversible antagonist of alpha-3/CHRNA3-containing and some alpha-4/CHRNA4-containing AChRs. This Bungarus candidus (Malayan krait) protein is Kappa 1b-bungarotoxin.